Reading from the N-terminus, the 325-residue chain is Bifunctional nuclease 2 (325 aa).

The BFN domain occupies 119–254 (CVHNNSQGRN…SLAYSDGIRS (136 aa)). Positions 285–320 (EAQEFGLIRNMLIAAVEERYKDAATWRDKLMLLRSK) constitute a UVR domain.

This sequence belongs to the bifunctional nuclease family.

It is found in the nucleus. In terms of biological role, bifunctional nuclease with both RNase and DNase activities. Involved in basal defense response. Participates in abscisic acid-derived callose deposition following infection by a necrotrophic pathogen. The chain is Bifunctional nuclease 2 (BBD2) from Oryza sativa subsp. japonica (Rice).